The primary structure comprises 666 residues: Magnesium-chelatase 67 kDa subunit (666 aa).

37-44 lines the ATP pocket; that stretch reads GRRGTGKT. Residues 327-367 are disordered; sequence LPDEEEQMQPPPPPPPPPPPPEPDKPDDPETPPDEAPKDEQ. The segment covering 335-347 has biased composition (pro residues); that stretch reads QPPPPPPPPPPPP. Residues 475 to 661 form the VWFA domain; the sequence is LIIFVVDASG…SLAETVKSGV (187 aa).

This sequence belongs to the Mg-chelatase subunits D/I family.

The enzyme catalyses protoporphyrin IX + Mg(2+) + ATP + H2O = Mg-protoporphyrin IX + ADP + phosphate + 3 H(+). Its pathway is porphyrin-containing compound metabolism; bacteriochlorophyll biosynthesis. Functionally, involved in bacteriochlorophyll biosynthesis; introduces a magnesium ion into protoporphyrin IX to yield Mg-protoporphyrin IX. This is Magnesium-chelatase 67 kDa subunit (bchD) from Heliobacterium mobile (Heliobacillus mobilis).